A 622-amino-acid chain; its full sequence is Low affinity potassium transport system protein Kup (622 aa).

Helical transmembrane passes span 9-29 (LSAV…TSPL), 46-66 (PDVV…VVSV), 101-121 (ILVV…VITP), 137-157 (PALD…LFVI), 165-185 (VGKL…LLGL), 213-233 (VSFF…ALYA), 247-267 (WFTV…ALLL), 276-296 (PFFL…ATLA), 337-357 (IYIP…IIGF), 363-383 (LAAA…ILFC), 395-415 (FLVA…FSAN), and 416-436 (VLKL…MFII).

This sequence belongs to the HAK/KUP transporter (TC 2.A.72) family.

Its subcellular location is the cell inner membrane. It carries out the reaction K(+)(in) + H(+)(in) = K(+)(out) + H(+)(out). Functionally, responsible for the low-affinity transport of potassium into the cell. Likely operates as a K(+):H(+) symporter. In Yersinia pseudotuberculosis serotype O:1b (strain IP 31758), this protein is Low affinity potassium transport system protein Kup.